We begin with the raw amino-acid sequence, 492 residues long: N-succinylglutamate 5-semialdehyde dehydrogenase (492 aa).

220-225 (GSASTG) is an NAD(+) binding site. Residues glutamate 243 and cysteine 277 contribute to the active site.

This sequence belongs to the aldehyde dehydrogenase family. AstD subfamily.

The enzyme catalyses N-succinyl-L-glutamate 5-semialdehyde + NAD(+) + H2O = N-succinyl-L-glutamate + NADH + 2 H(+). The protein operates within amino-acid degradation; L-arginine degradation via AST pathway; L-glutamate and succinate from L-arginine: step 4/5. Its function is as follows. Catalyzes the NAD-dependent reduction of succinylglutamate semialdehyde into succinylglutamate. The polypeptide is N-succinylglutamate 5-semialdehyde dehydrogenase (Salmonella agona (strain SL483)).